The chain runs to 470 residues: Nuclear receptor ROR-beta (470 aa).

A DNA-binding region (nuclear receptor) is located at residues 18–93 (VIPCKICGDK…LGMSRDAVKF (76 aa)). NR C4-type zinc fingers lie at residues 21-41 (CKICGDKSSGIHYGVITCEGC) and 57-81 (CPRQRNCLIDRTNRNRCQHCRLQKC). The segment covering 104 to 117 (LYAEVQKHQQRLQE) has biased composition (basic and acidic residues). A disordered region spans residues 104-127 (LYAEVQKHQQRLQEQRQQQSGEAE). The region spanning 222-460 (EIDRIAQNII…TLFPPLYKEL (239 aa)) is the NR LBD domain. An AF-2 motif is present at residues 456–461 (LYKELF).

Belongs to the nuclear hormone receptor family. NR1 subfamily. Monomer. Interacts with CRX.

The protein resides in the nucleus. The protein localises to the nucleoplasm. Its function is as follows. Nuclear receptor that binds DNA as a monomer to ROR response elements (RORE) containing a single core motif half-site 5'-AGGTCA-3' preceded by a short A-T-rich sequence. Considered to have intrinsic transcriptional activity, have some natural ligands such as all-trans retinoic acid (ATRA) and other retinoids which act as inverse agonists repressing the transcriptional activity. Required for normal postnatal development of rod and cone photoreceptor cells. Modulates rod photoreceptors differentiation at least by inducing the transcription factor NRL-mediated pathway. In cone photoreceptor cells, regulates transcription of OPN1SW. Involved in the regulation of the period length and stability of the circadian rhythm. May control cytoarchitectural patterning of neocortical neurons during development. May act in a dose-dependent manner to regulate barrel formation upon innervation of layer IV neurons by thalamocortical axons. May play a role in the suppression of osteoblastic differentiation through the inhibition of RUNX2 transcriptional activity. In terms of biological role, isoform 1 is critical for hindlimb motor control and for the differentiation of amacrine and horizontal cells in the retina. Regulates the expression of PTF1A synergistically with FOXN4. In Homo sapiens (Human), this protein is Nuclear receptor ROR-beta (RORB).